The primary structure comprises 391 residues: Phosphoglycerate kinase (391 aa).

Substrate is bound by residues 21–23 (DLN), Arg36, 59–62 (HLGR), Arg113, and Arg146. Residues Lys197, Glu319, and 345 to 348 (GGDT) contribute to the ATP site.

Belongs to the phosphoglycerate kinase family. Monomer.

The protein resides in the cytoplasm. The catalysed reaction is (2R)-3-phosphoglycerate + ATP = (2R)-3-phospho-glyceroyl phosphate + ADP. It participates in carbohydrate degradation; glycolysis; pyruvate from D-glyceraldehyde 3-phosphate: step 2/5. This is Phosphoglycerate kinase from Shewanella sediminis (strain HAW-EB3).